A 751-amino-acid polypeptide reads, in one-letter code: Phosphate transporter PHO1 homolog 8 (751 aa).

In terms of domain architecture, SPX spans 1-299 (MKFGKEYVAQ…LRNAAKLYME (299 aa)). The Cytoplasmic portion of the chain corresponds to 1 to 351 (MKFGKEYVAQ…KVTKEKHRIT (351 aa)). The chain crosses the membrane as a helical span at residues 352–372 (FSTGFFVGCTVSLVIALGLFI). Over 373-392 (HARNIMGAVGHKLYMETMFP) the chain is Extracellular. The chain crosses the membrane as a helical span at residues 393–413 (LYSLFAFVVLHMIMYASNIYF). Topologically, residues 414-434 (WKRYRVNYPFIFGFKEGTELG) are cytoplasmic. The helical transmembrane segment at 435-455 (YGHVLLLSFGLGTLALCAVLV) threads the bilayer. Over 456-473 (NMDMEMDPNTNDYKTITE) the chain is Extracellular. The chain crosses the membrane as a helical span at residues 474–494 (LVPLFVVALVIAISVCPFNIF). Residues 495–623 (YRSSRFFFLM…FSINRGNDWK (129 aa)) are Cytoplasmic-facing. One can recognise an EXS domain in the interval 558–751 (KSSDVYSTFY…NYDEEEDRDS (194 aa)). A helical transmembrane segment spans residues 624–644 (IAAWVFSGLATFYGTYWDIVY). Residues 645-667 (DWGLLHRPSKSWLREKLLVPHKS) lie on the Extracellular side of the membrane. Residues 668–688 (VYYVAMVVNVVLRLAWLQTVL) traverse the membrane as a helical segment. The Cytoplasmic segment spans residues 689–751 (DFNISFLHRE…NYDEEEDRDS (63 aa)).

It belongs to the SYG1 (TC 2.A.94) family. In terms of tissue distribution, expressed in root epidermis, leaf hydathodes, trichomes and petioles, stem vascular cylinder, receptacle, stigma apex and pollen grains.

Its subcellular location is the cell membrane. Functionally, may transport inorganic phosphate (Pi). This is Phosphate transporter PHO1 homolog 8 (PHO1-H8) from Arabidopsis thaliana (Mouse-ear cress).